A 445-amino-acid polypeptide reads, in one-letter code: Glucose-6-phosphate isomerase (445 aa).

Residue Glu287 is the Proton donor of the active site. Active-site residues include His308 and Lys422.

The protein belongs to the GPI family.

The protein resides in the cytoplasm. It catalyses the reaction alpha-D-glucose 6-phosphate = beta-D-fructose 6-phosphate. Its pathway is carbohydrate biosynthesis; gluconeogenesis. The protein operates within carbohydrate degradation; glycolysis; D-glyceraldehyde 3-phosphate and glycerone phosphate from D-glucose: step 2/4. In terms of biological role, catalyzes the reversible isomerization of glucose-6-phosphate to fructose-6-phosphate. The sequence is that of Glucose-6-phosphate isomerase from Bacteroides fragilis (strain ATCC 25285 / DSM 2151 / CCUG 4856 / JCM 11019 / LMG 10263 / NCTC 9343 / Onslow / VPI 2553 / EN-2).